The sequence spans 499 residues: Glycerol kinase (499 aa).

ADP is bound at residue T12. Residues T12, T13, and S14 each contribute to the ATP site. T12 is a binding site for sn-glycerol 3-phosphate. R16 provides a ligand contact to ADP. 4 residues coordinate sn-glycerol 3-phosphate: R82, E83, Y134, and D240. Glycerol is bound by residues R82, E83, Y134, D240, and Q241. T262 and G306 together coordinate ADP. ATP is bound by residues T262, G306, Q310, and G412. Residues G412 and N416 each coordinate ADP.

The protein belongs to the FGGY kinase family.

It carries out the reaction glycerol + ATP = sn-glycerol 3-phosphate + ADP + H(+). It functions in the pathway polyol metabolism; glycerol degradation via glycerol kinase pathway; sn-glycerol 3-phosphate from glycerol: step 1/1. With respect to regulation, inhibited by fructose 1,6-bisphosphate (FBP). Its function is as follows. Key enzyme in the regulation of glycerol uptake and metabolism. Catalyzes the phosphorylation of glycerol to yield sn-glycerol 3-phosphate. This is Glycerol kinase from Nocardia farcinica (strain IFM 10152).